We begin with the raw amino-acid sequence, 250 residues long: Probable transcriptional regulatory protein Ppha_0657 (250 aa).

The protein belongs to the TACO1 family.

Its subcellular location is the cytoplasm. The chain is Probable transcriptional regulatory protein Ppha_0657 from Pelodictyon phaeoclathratiforme (strain DSM 5477 / BU-1).